The sequence spans 351 residues: Cyanuric acid amidohydrolase (351 aa).

The RU A stretch occupies residues 1 to 96 (MPSLRAHVFR…HWTVFARETV (96 aa)). Substrate is bound by residues R53 and 77-78 (SG). The RU B stretch occupies residues 103-240 (ALAIGVSRTP…HEIIVLGMSA (138 aa)). The active site involves K153. Substrate is bound by residues R185 and 223-224 (SS). Residue S223 is the Nucleophile of the active site. The tract at residues 246-351 (LSIDHAVMRD…PVAIIVEKEQ (106 aa)) is RU C. E283 contacts Mg(2+). Substrate is bound by residues R310 and 329–330 (SG). Mg(2+)-binding residues include A332, Q335, G336, P337, and G340.

Belongs to the cyclic amide hydrolase (CyAH) family. Homotetramer.

The catalysed reaction is cyanurate + H2O = 1-carboxybiuret + H(+). It functions in the pathway xenobiotic degradation; atrazine degradation; biuret from cyanurate: step 1/1. Inhibited by barbituric acid. Responsible for the hydrolysis of cyanuric acid, an intermediate formed during catabolism of s-triazine based compounds in herbicides such as atrazine and polymers such as melamine. Catalyzes the hydrolytic opening of the s-triazine ring of cyanuric acid (2,4,6-trihydroxy-s-triazine) to yield carbon dioxide and carboxybiuret, which spontaneously decarboxylates to biuret. The sequence is that of Cyanuric acid amidohydrolase from Rhizobium johnstonii (strain DSM 114642 / LMG 32736 / 3841) (Rhizobium leguminosarum bv. viciae).